We begin with the raw amino-acid sequence, 581 residues long: MAVRQALGRGLQLGRALLLRFTGKPGRAYGLGRPGPAAGCVRGERPGWAAGPGAEPRRVGLGLPNRLRFFRQSVAGLAARLQRQFVVRAWGCAGPCGRAVFLAFGLGLGLIEEKQAESRRAVSACQEIQAIFTQKSKPGPDPLDTRRLQGFRLEEYLIGQSIGKGCSAAVYEATMPTLPQNLEVTKSTGLLPGRGPGTSAPGEGQERAPGAPAFPLAIKMMWNISAGSSSEAILNTMSQELVPASRVALAGEYGAVTYRKSKRGPKQLAPHPNIIRVLRAFTSSVPLLPGALVDYPDVLPSRLHPEGLGHGRTLFLVMKNYPCTLRQYLCVNTPSPRLAAMMLLQLLEGVDHLVQQGIAHRDLKSDNILVELDPDGCPWLVIADFGCCLADESIGLQLPFSSWYVDRGGNGCLMAPEVSTARPGPRAVIDYSKADAWAVGAIAYEIFGLVNPFYGQGKAHLESRSYQEAQLPALPESVPPDVRQLVRALLQREASKRPSARVAANVLHLSLWGEHILALKNLKLDKMVGWLLQQSAATLLANRLTEKCCVETKMKMLFLANLECETLCQAALLLCSWRAAL.

Residues 1-77 constitute a mitochondrion transit peptide; it reads MAVRQALGRG…RFFRQSVAGL (77 aa). The Mitochondrial intermembrane segment spans residues 78 to 93; it reads AARLQRQFVVRAWGCA. Residues 94-110 form a helical membrane-spanning segment; sequence GPCGRAVFLAFGLGLGL. A required for outer membrane localization region spans residues 111-117; it reads IEEKQAE. Topologically, residues 111-581 are cytoplasmic; the sequence is IEEKQAESRR…LLLCSWRAAL (471 aa). Positions 156-511 constitute a Protein kinase domain; the sequence is YLIGQSIGKG…VAANVLHLSL (356 aa). Residues 162–170 and Lys186 contribute to the ATP site; that span reads IGKGCSAAV. The interval 189-208 is disordered; the sequence is GLLPGRGPGTSAPGEGQERA. Residue Ser228 is modified to Phosphoserine; by autocatalysis. Asp362 acts as the Proton acceptor in catalysis. Ser402 is modified (phosphoserine; by autocatalysis).

Belongs to the protein kinase superfamily. Ser/Thr protein kinase family. In terms of assembly, upon mitochondrial depolarization, it forms a supercomplex with TOM and TIM23 complexes. PINK1-TOM-TIM23 supercomplex formation requires PINK1 interaction with TOMM20 and TOMM70 and is critical for PINK1 stabilization at the outer mitochondrial membrane, kinase activation and downstream mitophagy. Upon mitochondrial depolarization, interacts with TIMM23; the interaction is required for PINK1 accumulation at the outer mitochondrial membrane, kinase activation by autophosphorylation and PRKN recruitement to mitochondria. Interacts with PRKN. Interacts with FBXO7. Forms a complex with PRKN and PARK7. Interacts with NENF. It depends on Mg(2+) as a cofactor. In terms of processing, proteolytically cleaved. In healthy cells, the precursor is continuously imported into the inner mitochondrial membrane (IMM), where it is proteolytically cleaved by mitochondrial-processing peptidase (MPP) and then undergoes further proteolytic cleavage by PARL or AFG3L2 to give rise to the 52 kDa short form. The 52 kDa short form is then released into the cytosol where it rapidly undergoes proteasome-dependent degradation. In unhealthy cells, when cellular stress conditions lead to the loss of mitochondrial membrane potential, mitochondrial import is impaired leading to the precursor accumulating on the outer mitochondrial membrane (OMM). If accumulation at the OMM fails and it is imported into the depolarized mitochondria, it undergoes cleavage by the IMM protease OMA1, promoting its subsequent degradation by the proteasome. Autophosphorylated. Loss of mitochondrial membrane potential results in the precursor accumulating on the outer mitochondrial membrane (OMM) where it is activated by autophosphorylation. Autophosphorylation at Ser-228 and Ser-402 is sufficient and essential for selective recruitment of PRKN to depolarized mitochondria, via PINK1-dependent phosphorylation of ubiquitin and maybe PRKN. Highly expressed in heart, skeletal muscle and testis, and at lower levels in brain, placenta, liver, kidney, pancreas, prostate, ovary and small intestine. Present in the embryonic testis from an early stage of development.

The protein resides in the mitochondrion outer membrane. The protein localises to the mitochondrion inner membrane. Its subcellular location is the cytoplasm. It is found in the cytosol. It carries out the reaction L-seryl-[protein] + ATP = O-phospho-L-seryl-[protein] + ADP + H(+). The enzyme catalyses L-threonyl-[protein] + ATP = O-phospho-L-threonyl-[protein] + ADP + H(+). Its function is as follows. Serine/threonine-protein kinase which acts as a sensor of mitochondrial damage and protects against mitochondrial dysfunction during cellular stress. It phosphorylates mitochondrial proteins to coordinate mitochondrial quality control mechanisms that remove and replace dysfunctional mitochondrial components. Depending on the severity of mitochondrial damage, activity ranges from preventing apoptosis and stimulating mitochondrial biogenesis to eliminating severely damaged mitochondria via PINK1-PRKN-dependent mitophagy. When cellular stress results in irreversible mitochondrial damage, PINK1 accumulates at the outer mitochondrial membrane (OMM) where it phosphorylates pre-existing polyubiquitin chains at 'Ser-65', recruits PRKN from the cytosol to the OMM and activates PRKN by phosphorylation at 'Ser-65'; activated PRKN then ubiquinates VDAC1 and other OMM proteins to initiate mitophagy. The PINK1-PRKN pathway also promotes fission of damaged mitochondria through phosphorylation and PRKN-dependent degradation of mitochondrial proteins involved in fission such as MFN2. This prevents the refusion of unhealthy mitochondria with the mitochondrial network or initiates mitochondrial fragmentation facilitating their later engulfment by autophagosomes. Also promotes mitochondrial fission independently of PRKN and ATG7-mediated mitophagy, via the phosphorylation and activation of DNM1L. Regulates motility of damaged mitochondria by promoting the ubiquitination and subsequent degradation of MIRO1 and MIRO2; in motor neurons, this likely inhibits mitochondrial intracellular anterograde transport along the axons which probably increases the chance of the mitochondria undergoing mitophagy in the soma. Required for ubiquinone reduction by mitochondrial complex I by mediating phosphorylation of complex I subunit NDUFA10. Phosphorylates LETM1, positively regulating its mitochondrial calcium transport activity. The sequence is that of Serine/threonine-protein kinase PINK1, mitochondrial (PINK1) from Homo sapiens (Human).